The chain runs to 388 residues: UTP--glucose-1-phosphate uridylyltransferase (388 aa).

Position 118 (Asp-118) interacts with Mg(2+).

The protein belongs to the CugP-type UDP-glucose pyrophosphorylase family. Mg(2+) serves as cofactor.

The enzyme catalyses alpha-D-glucose 1-phosphate + UTP + H(+) = UDP-alpha-D-glucose + diphosphate. Catalyzes the formation of UDP-glucose, from UTP and glucose 1-phosphate. Is highly specific since it cannot use other NTPs such as dTTP, CTP, ATP, and GTP, and other sugar-1P such as GlcNAc-1P, Gal-1P, and Man-1P, as substrates. Has probably a central and essential role as the substrate supplier for galactolipid synthesis; galactolipids are major constituents of the photosynthetic thylakoid membrane and important for photosynthetic activity. The polypeptide is UTP--glucose-1-phosphate uridylyltransferase (Synechocystis sp. (strain ATCC 27184 / PCC 6803 / Kazusa)).